We begin with the raw amino-acid sequence, 230 residues long: Cytochrome c oxidase subunit 2 (230 aa).

The Mitochondrial intermembrane portion of the chain corresponds to 1–14; sequence MAHPSQLGFQDAAS. A helical membrane pass occupies residues 15–45; it reads PVMEELIHFHDHTLMIVFLISTLVLYIITAM. The Mitochondrial matrix segment spans residues 46-59; that stretch reads VSTKLTNKYILDSQ. A helical transmembrane segment spans residues 60 to 87; sequence EIEIVWTILPAIILIMIALPSLRILYLM. Residues 88–230 lie on the Mitochondrial intermembrane side of the membrane; that stretch reads DEINDPHLTI…TWSSLMLEEA (143 aa). Residues His161, Cys196, Glu198, Cys200, His204, and Met207 each coordinate Cu cation. Position 198 (Glu198) interacts with Mg(2+).

Belongs to the cytochrome c oxidase subunit 2 family. As to quaternary structure, component of the cytochrome c oxidase (complex IV, CIV), a multisubunit enzyme composed of 14 subunits. The complex is composed of a catalytic core of 3 subunits MT-CO1, MT-CO2 and MT-CO3, encoded in the mitochondrial DNA, and 11 supernumerary subunits COX4I, COX5A, COX5B, COX6A, COX6B, COX6C, COX7A, COX7B, COX7C, COX8 and NDUFA4, which are encoded in the nuclear genome. The complex exists as a monomer or a dimer and forms supercomplexes (SCs) in the inner mitochondrial membrane with NADH-ubiquinone oxidoreductase (complex I, CI) and ubiquinol-cytochrome c oxidoreductase (cytochrome b-c1 complex, complex III, CIII), resulting in different assemblies (supercomplex SCI(1)III(2)IV(1) and megacomplex MCI(2)III(2)IV(2)). Found in a complex with TMEM177, COA6, COX18, COX20, SCO1 and SCO2. Interacts with TMEM177 in a COX20-dependent manner. Interacts with COX20. Interacts with COX16. The cofactor is Cu cation.

It is found in the mitochondrion inner membrane. It catalyses the reaction 4 Fe(II)-[cytochrome c] + O2 + 8 H(+)(in) = 4 Fe(III)-[cytochrome c] + 2 H2O + 4 H(+)(out). In terms of biological role, component of the cytochrome c oxidase, the last enzyme in the mitochondrial electron transport chain which drives oxidative phosphorylation. The respiratory chain contains 3 multisubunit complexes succinate dehydrogenase (complex II, CII), ubiquinol-cytochrome c oxidoreductase (cytochrome b-c1 complex, complex III, CIII) and cytochrome c oxidase (complex IV, CIV), that cooperate to transfer electrons derived from NADH and succinate to molecular oxygen, creating an electrochemical gradient over the inner membrane that drives transmembrane transport and the ATP synthase. Cytochrome c oxidase is the component of the respiratory chain that catalyzes the reduction of oxygen to water. Electrons originating from reduced cytochrome c in the intermembrane space (IMS) are transferred via the dinuclear copper A center (CU(A)) of subunit 2 and heme A of subunit 1 to the active site in subunit 1, a binuclear center (BNC) formed by heme A3 and copper B (CU(B)). The BNC reduces molecular oxygen to 2 water molecules using 4 electrons from cytochrome c in the IMS and 4 protons from the mitochondrial matrix. The polypeptide is Cytochrome c oxidase subunit 2 (MT-CO2) (Scyliorhinus canicula (Small-spotted catshark)).